The primary structure comprises 314 residues: Olfactory receptor 8U9 (314 aa).

At 1–25 (MAQINCTQVTEFILVGLTDREELKM) the chain is on the extracellular side. A glycan (N-linked (GlcNAc...) asparagine) is linked at asparagine 5. A helical transmembrane segment spans residues 26-46 (PLFVVFLSIYLFTTLGNLGLI). Residues 47-54 (LVIRTDAR) are Cytoplasmic-facing. The chain crosses the membrane as a helical span at residues 55–75 (LHTPMYFFLSNLAFVDFCYSS). Over 76–99 (VITPKMLGNFLYKQNMISFNACAA) the chain is Extracellular. Cysteine 97 and cysteine 189 are oxidised to a cystine. Residues 100–120 (QLGCFLAFMTAECLLLASMAY) traverse the membrane as a helical segment. At 121–133 (DRYVAICNPLLYM) the chain is on the cytoplasmic side. The helical transmembrane segment at 134 to 154 (VLMSPGICFQLVAAPYSYSFL) threads the bilayer. Residues 155–196 (VALFHAILTFRLCYCHSNAINHFYCDDMPLLRLTCSDTHSKQ) lie on the Extracellular side of the membrane. The helical transmembrane segment at 197 to 217 (LWIFVCAGIMFISSLLIVFIS) threads the bilayer. Residues 218–237 (YTFIISAILRMRSAEGRRKA) lie on the Cytoplasmic side of the membrane. A helical membrane pass occupies residues 238-258 (FSTCGSHMLAVTIFYGTLIFM). Residues 259 to 271 (YLQPSSNHSLDTD) are Extracellular-facing. Asparagine 265 carries N-linked (GlcNAc...) asparagine glycosylation. Residues 272–292 (KMASVFYTVIIPMLNPLIYSL) traverse the membrane as a helical segment. Residues 293-314 (RNKEVKDALKKLIASKNQMLSS) lie on the Cytoplasmic side of the membrane.

The protein belongs to the G-protein coupled receptor 1 family.

The protein resides in the cell membrane. In terms of biological role, potential odorant receptor. The sequence is that of Olfactory receptor 8U9 from Mus musculus (Mouse).